A 262-amino-acid chain; its full sequence is Acyl-[acyl-carrier-protein]--UDP-N-acetylglucosamine O-acyltransferase (262 aa).

Belongs to the transferase hexapeptide repeat family. LpxA subfamily. As to quaternary structure, homotrimer.

Its subcellular location is the cytoplasm. The enzyme catalyses a (3R)-hydroxyacyl-[ACP] + UDP-N-acetyl-alpha-D-glucosamine = a UDP-3-O-[(3R)-3-hydroxyacyl]-N-acetyl-alpha-D-glucosamine + holo-[ACP]. It functions in the pathway glycolipid biosynthesis; lipid IV(A) biosynthesis; lipid IV(A) from (3R)-3-hydroxytetradecanoyl-[acyl-carrier-protein] and UDP-N-acetyl-alpha-D-glucosamine: step 1/6. In terms of biological role, involved in the biosynthesis of lipid A, a phosphorylated glycolipid that anchors the lipopolysaccharide to the outer membrane of the cell. The protein is Acyl-[acyl-carrier-protein]--UDP-N-acetylglucosamine O-acyltransferase of Salmonella typhi.